The primary structure comprises 311 residues: Acetyl-coenzyme A carboxylase carboxyl transferase subunit alpha (311 aa).

A CoA carboxyltransferase C-terminal domain is found at 36 to 286; that stretch reads NLSKEISKVY…ANYFISELAE (251 aa).

The protein belongs to the AccA family. Acetyl-CoA carboxylase is a heterohexamer composed of biotin carboxyl carrier protein (AccB), biotin carboxylase (AccC) and two subunits each of ACCase subunit alpha (AccA) and ACCase subunit beta (AccD).

Its subcellular location is the cytoplasm. It carries out the reaction N(6)-carboxybiotinyl-L-lysyl-[protein] + acetyl-CoA = N(6)-biotinyl-L-lysyl-[protein] + malonyl-CoA. Its pathway is lipid metabolism; malonyl-CoA biosynthesis; malonyl-CoA from acetyl-CoA: step 1/1. Component of the acetyl coenzyme A carboxylase (ACC) complex. First, biotin carboxylase catalyzes the carboxylation of biotin on its carrier protein (BCCP) and then the CO(2) group is transferred by the carboxyltransferase to acetyl-CoA to form malonyl-CoA. This Campylobacter concisus (strain 13826) protein is Acetyl-coenzyme A carboxylase carboxyl transferase subunit alpha.